The sequence spans 77 residues: Large ribosomal subunit protein eL20 (77 aa).

Belongs to the eukaryotic ribosomal protein eL20 family. In terms of assembly, part of the 50S ribosomal subunit. Binds 23S rRNA.

The chain is Large ribosomal subunit protein eL20 from Thermococcus kodakarensis (strain ATCC BAA-918 / JCM 12380 / KOD1) (Pyrococcus kodakaraensis (strain KOD1)).